We begin with the raw amino-acid sequence, 267 residues long: uncharacterized protein (267 aa).

It belongs to the lin-8 family.

This is an uncharacterized protein from Caenorhabditis elegans.